We begin with the raw amino-acid sequence, 412 residues long: Multifunctional CCA protein (412 aa).

G8 and R11 together coordinate ATP. G8 and R11 together coordinate CTP. Mg(2+)-binding residues include D21 and D23. ATP is bound by residues R91, R137, and R140. 3 residues coordinate CTP: R91, R137, and R140. An HD domain is found at 228–329 (TGIHTLMTLS…VKLFDSIDAW (102 aa)).

This sequence belongs to the tRNA nucleotidyltransferase/poly(A) polymerase family. Bacterial CCA-adding enzyme type 1 subfamily. In terms of assembly, monomer. Can also form homodimers and oligomers. Requires Mg(2+) as cofactor. The cofactor is Ni(2+).

It catalyses the reaction a tRNA precursor + 2 CTP + ATP = a tRNA with a 3' CCA end + 3 diphosphate. The catalysed reaction is a tRNA with a 3' CCA end + 2 CTP + ATP = a tRNA with a 3' CCACCA end + 3 diphosphate. Catalyzes the addition and repair of the essential 3'-terminal CCA sequence in tRNAs without using a nucleic acid template. Adds these three nucleotides in the order of C, C, and A to the tRNA nucleotide-73, using CTP and ATP as substrates and producing inorganic pyrophosphate. tRNA 3'-terminal CCA addition is required both for tRNA processing and repair. Also involved in tRNA surveillance by mediating tandem CCA addition to generate a CCACCA at the 3' terminus of unstable tRNAs. While stable tRNAs receive only 3'-terminal CCA, unstable tRNAs are marked with CCACCA and rapidly degraded. The protein is Multifunctional CCA protein of Shigella flexneri.